A 73-amino-acid polypeptide reads, in one-letter code: Excelsatoxin A (73 aa).

The first 20 residues, 1–20, serve as a signal peptide directing secretion; it reads MRFALVAAITIALLVAGSVA. A propeptide spanning residues 21–37 is cleaved from the precursor; that stretch reads DESSEDIDNIVIKTPLD. Cystine bridges form between Cys41-Cys58, Cys46-Cys60, and Cys54-Cys69.

It belongs to the gympietide family. As to expression, expressed in trichomes, that are stiff epidermal hairs located on the surface of petioles and leaves. Not expressed in other aerial parts.

It localises to the secreted. Neurotoxin certainly responsible for the defensive, persistent, and painful stings of the giant stinging tree. Inhibits inactivation of Nav1.7/SCN9A sodium channel in sensory neurons by directly interacting with TMEM233, a newly described Nav-interacting protein. Has virtually no effect on Nav1.7/SCN9A function in heterologous expression systems and in neurons that do not express TMEM233. Also weakly but significantly affects Nav1.8/SCN10A. Coexpression of TMEM233 with Nav also confers ExTxA sensitivity to Nav1.1-Nav1.6. On the Nav1.7/SCN9A channel, causes a significant hyperpolarizing shift in the voltage dependence of activation. Its effects on Nav currents are irreversible, with no apparent reduction in activity even after repeated wash steps over 30 minutes. Does not show activity on Nav1.9/SCN11A. Does not show insecticidal activities. In vivo, induces nocifensive behavior in mice (licking or biting and shaking or lifting of the affected paw) lasting for approximately 1 hour. The sequence is that of Excelsatoxin A from Dendrocnide excelsa (Giant stinging tree).